The following is a 277-amino-acid chain: NADPH-dependent 7-cyano-7-deazaguanine reductase (277 aa).

83 to 85 is a binding site for substrate; that stretch reads VES. Residue 85–86 coordinates NADPH; the sequence is SK. Cys184 acts as the Thioimide intermediate in catalysis. Asp191 serves as the catalytic Proton donor. 223-224 contacts substrate; the sequence is HE. 252–253 is an NADPH binding site; it reads RG.

It belongs to the GTP cyclohydrolase I family. QueF type 2 subfamily. As to quaternary structure, homodimer.

The protein localises to the cytoplasm. It catalyses the reaction 7-aminomethyl-7-carbaguanine + 2 NADP(+) = 7-cyano-7-deazaguanine + 2 NADPH + 3 H(+). Its pathway is tRNA modification; tRNA-queuosine biosynthesis. In terms of biological role, catalyzes the NADPH-dependent reduction of 7-cyano-7-deazaguanine (preQ0) to 7-aminomethyl-7-deazaguanine (preQ1). The polypeptide is NADPH-dependent 7-cyano-7-deazaguanine reductase (Cupriavidus taiwanensis (strain DSM 17343 / BCRC 17206 / CCUG 44338 / CIP 107171 / LMG 19424 / R1) (Ralstonia taiwanensis (strain LMG 19424))).